The chain runs to 905 residues: A disintegrin and metalloproteinase with thrombospondin motifs 8 (905 aa).

An N-terminal signal peptide occupies residues 1-28 (MLRDPTTTGWPPLLLLLLQLPPPPLVCG). The propeptide occupies 29–228 (APAGPGTGAQ…PFGSKTRSKR (200 aa)). Disordered regions lie at residues 139 to 163 (PQGA…RRED) and 186 to 225 (NGQG…SKTR). Basic and acidic residues predominate over residues 191–215 (ERSDNEEDRKQDKEGLLKETEDSRK). A Peptidase M12B domain is found at 234 to 444 (RFVETLLVAD…GHGDCLLDAP (211 aa)). Disulfide bonds link Cys309-Cys362, Cys338-Cys344, Cys356-Cys439, Cys394-Cys423, Cys478-Cys502, Cys487-Cys523, Cys517-Cys528, Cys554-Cys591, Cys558-Cys596, and Cys569-Cys581. His378 provides a ligand contact to Zn(2+). The active site involves Glu379. Zn(2+) contacts are provided by His382 and His388. 3 N-linked (GlcNAc...) asparagine glycosylation sites follow: Asn415, Asn480, and Asn506. One can recognise a Disintegrin domain in the interval 453-541 (GLPGHSTLYE…EDVENPKAVV (89 aa)). In terms of domain architecture, TSP type-1 1 spans 542-597 (DGDWGPWRPWGQCSRTCGGGIQFSNRECDNPMPQNGGRFCLGERVKYQSCNTEECP). Asn615 is a glycosylation site (N-linked (GlcNAc...) asparagine). The segment at 706 to 847 (RKISGSFTPF…RATTNIIQSL (142 aa)) is spacer. One can recognise a TSP type-1 2 domain in the interval 848 to 904 (PSAEWVLGDWSECPSTCRGSWQRRTVECRDPSGQASDTCDEALKPEDAKPCGSQPCP). The interval 877–905 (DPSGQASDTCDEALKPEDAKPCGSQPCPL) is disordered.

It depends on Zn(2+) as a cofactor. Post-translationally, the precursor is cleaved by a furin endopeptidase. Glycosylated. Can be O-fucosylated by POFUT2 on a serine or a threonine residue found within the consensus sequence C1-X(2)-(S/T)-C2-G of the TSP type-1 repeat domains where C1 and C2 are the first and second cysteine residue of the repeat, respectively. Fucosylated repeats can then be further glycosylated by the addition of a beta-1,3-glucose residue by the glucosyltransferase, B3GALTL. Fucosylation mediates the efficient secretion of ADAMTS family members. Can also be C-glycosylated with one or two mannose molecules on tryptophan residues within the consensus sequence W-X-X-W of the TPRs, and N-glycosylated. These other glycosylations can also facilitate secretion. In terms of tissue distribution, expressed specifically in adult lung and heart and low expression during mouse development.

It localises to the secreted. Its subcellular location is the extracellular space. The protein localises to the extracellular matrix. Functionally, has anti-angiogenic properties. The chain is A disintegrin and metalloproteinase with thrombospondin motifs 8 (Adamts8) from Mus musculus (Mouse).